The chain runs to 1165 residues: MFQIPVQNLDNIRKVRKRVKGILVDIGLDSCKELMKDLKSFDPGEKYFYNTSWGDVSPWEPSGKKARYRTKPYCCSLCRYSTKVLTSLKNHLHRYHEDEADQELMIPCPNCPFSSQPRVVGKHFRMFHAPARKVQSYTVNILGETKTSRSDVISFTCLKCNFSNTLYYSMKKHVLVAHFNYLINSYFGLRTEETGEQPKASDPVSVDKILPFDKYYCKKCSAIASSQDALMYHILTSDAHRDLENKLRSVISEHIKRTGFLKQMHIAPKPVTHLALPPNSSAPSIAAPPPCFQLALPQNSQSSGTVQSVTVTPGTSGSLTHSPPTTAQSHVALVSSSLPVCQSSLSLQQSAPPPVFLSHSVALNQPVNTAVLPLTQPVGPVNKSVGTSILPVNQAMCSVNQAVRPGLLPLTKPMGPMNRPVGPAVLPMGPSVNSGVLQATSPGVISVGRAVPSGVLPAGQVTPAGVIPGQTATSGVLPTGQVVQSSTLPVGQTAPSRGLPPGQTVPLRVLPAGQVVPSGLLSSNQTVPSGVVPVNQGVNSGVLQLGQPVTPGVLPVGPPVRPGVLQLSPSVSTSILPMSQPVRAGTSQNTTFFTSGSILRQLIPTGKQVNGIPTYTLAPVSVTLPVPSGGGLAAVGPPPQVPVQFLPSGSGTQMGSSLPSLPSPQVLVSPAPSVFVQATPPLADANQALKQAKQWKTCPVCNELFPSNVYQVHMEVAHKQSEAQLCQVCNELFPANVYQVHMEVAHKQSESKSSEKLEPEKLAACAPFLKWMREKTVRCLSCKCLVSQEELMHHLLMHGLGCLFCPCTFHDVRGLVEHSRTKHLGKKRLSMDYSNRGFQLDLDANGNLLFPHLDFITILPREKLGEREVYLAILAGIHSKSLVPVYVKVRPQPEVAPKIPNKQKLTCPFCLSTFMTADAYELHLKERHHVMPTVHTMLRSPAFKCIHCCGVYTGNMTLGAIAVHLLRCRSAPKDSSSDLQVQPGFIESSELLMVNGDVIPESTFPVKRKLPEGHLGPEDQRDGEEPQLTLDADASSGSEKGLGAVPLKRQKSEIRTEGSGPSEDSLQALALDPSKYEGRSYEEKKQFLRDYFHRRPYPSRKEVELLSSLLWVWKIDVASFFGKRRYICMKAIKTHKPSVLLGFDMSELKNVKHRLNFGECESQKL.

The C2H2-type 1 zinc-finger motif lies at 73–96 (YCCSLCRYSTKVLTSLKNHLHRYH). The C2H2-type 2; degenerate zinc-finger motif lies at 106–128 (IPCPNCPFSSQPRVVGKHFRMFH). Residue Lys146 forms a Glycyl lysine isopeptide (Lys-Gly) (interchain with G-Cter in SUMO2) linkage. The segment at 155 to 178 (FTCLKCNFSNTLYYSMKKHVLVAH) adopts a C2H2-type 3; degenerate zinc-finger fold. The segment at 215–240 (YYCKKCSAIASSQDALMYHILTSDAH) adopts a C2H2-type 4 zinc-finger fold. Residues 303-318 (SGTVQSVTVTPGTSGS) show a composition bias toward low complexity. The disordered stretch occupies residues 303-327 (SGTVQSVTVTPGTSGSLTHSPPTTA). The C2H2-type 5; degenerate zinc finger occupies 696 to 718 (KTCPVCNELFPSNVYQVHMEVAH). Residues 724–746 (QLCQVCNELFPANVYQVHMEVAH) form a C2H2-type 6; degenerate zinc finger. The C2H2-type 7; degenerate zinc-finger motif lies at 777-798 (VRCLSCKCLVSQEELMHHLLMH). C2H2-type zinc fingers lie at residues 800–823 (LGCL…RTKH) and 905–935 (LTCP…PTVH). The interval 1005–1068 (PVKRKLPEGH…SGPSEDSLQA (64 aa)) is disordered. Glycyl lysine isopeptide (Lys-Gly) (interchain with G-Cter in SUMO2) cross-links involve residues Lys1009 and Lys1048. Residues 1009 to 1024 (KLPEGHLGPEDQRDGE) are compositionally biased toward basic and acidic residues. A DNA-binding region (homeobox) is located at residues 1090–1132 (DYFHRRPYPSRKEVELLSSLLWVWKIDVASFFGKRRYICMKAI).

The protein belongs to the krueppel C2H2-type zinc-finger protein family. In terms of assembly, may interact with SMARCA4/BRG1. In terms of tissue distribution, expressed widely, with the highest level in the brain.

The protein resides in the nucleus. May be involved in transcriptional regulation. May play a role in neuronal function; perhaps involved in protection of brain tissues from oxidative stress. May be involved in erythroid differentiation. This is Activity-dependent neuroprotector homeobox protein 2 (Adnp2) from Mus musculus (Mouse).